Here is a 234-residue protein sequence, read N- to C-terminus: Sugar fermentation stimulation protein homolog (234 aa).

This sequence belongs to the SfsA family.

The sequence is that of Sugar fermentation stimulation protein homolog from Pectobacterium atrosepticum (strain SCRI 1043 / ATCC BAA-672) (Erwinia carotovora subsp. atroseptica).